Reading from the N-terminus, the 335-residue chain is UPF0353 protein Mjls_2492 (335 aa).

2 helical membrane-spanning segments follow: residues 18–38 (WFFL…IVAL) and 67–87 (LPAI…AGPT). Residues 98 to 294 (VVMLVIDVSQ…EQLREVYANL (197 aa)) enclose the VWFA domain. The helical transmembrane segment at 309–329 (VGWLRLGALVLALSALAALLL) threads the bilayer.

Belongs to the UPF0353 family.

It localises to the cell membrane. This Mycobacterium sp. (strain JLS) protein is UPF0353 protein Mjls_2492.